Here is a 153-residue protein sequence, read N- to C-terminus: UPF0260 protein YcgN (153 aa).

This sequence belongs to the UPF0260 family.

The polypeptide is UPF0260 protein YcgN (Shigella boydii serotype 18 (strain CDC 3083-94 / BS512)).